The chain runs to 301 residues: L-threonate dehydrogenase (301 aa).

Residues 6–34 (YSVA…TYGI) and threonine 101 each bind NAD(+). Lysine 177 is a catalytic residue. Lysine 245 lines the NAD(+) pocket.

This sequence belongs to the HIBADH-related family. L-threonate dehydrogenase subfamily.

The catalysed reaction is L-threonate + NAD(+) = 2-dehydro-L-erythronate + NADH + H(+). Its function is as follows. Catalyzes oxidation of L-threonate to 2-oxo-tetronate. Can use either NAD(+) or NADP(+) as cosubstrate, with a preference for NAD(+). The chain is L-threonate dehydrogenase from Haemophilus influenzae (strain ATCC 51907 / DSM 11121 / KW20 / Rd).